A 449-amino-acid chain; its full sequence is Signal recognition particle protein (449 aa).

GTP-binding positions include 109–116, 191–195, and 249–252; these read GLQGGGKT, DTAGR, and SRID.

This sequence belongs to the GTP-binding SRP family. SRP54 subfamily. In terms of assembly, part of the signal recognition particle protein translocation system, which is composed of SRP and FtsY. SRP is a ribonucleoprotein composed of Ffh and a 4.5S RNA molecule.

It localises to the cytoplasm. The catalysed reaction is GTP + H2O = GDP + phosphate + H(+). In terms of biological role, involved in targeting and insertion of nascent membrane proteins into the cytoplasmic membrane. Binds to the hydrophobic signal sequence of the ribosome-nascent chain (RNC) as it emerges from the ribosomes. The SRP-RNC complex is then targeted to the cytoplasmic membrane where it interacts with the SRP receptor FtsY. Interaction with FtsY leads to the transfer of the RNC complex to the Sec translocase for insertion into the membrane, the hydrolysis of GTP by both Ffh and FtsY, and the dissociation of the SRP-FtsY complex into the individual components. This Rickettsia prowazekii (strain Madrid E) protein is Signal recognition particle protein.